The sequence spans 470 residues: Glutamate--tRNA ligase (470 aa).

The 'HIGH' region motif lies at 12–22; sequence PSPTGIFHVGG. Residues Cys103, Cys105, Cys125, and Asp127 each coordinate Zn(2+). The 'KMSKS' region signature appears at 236 to 240; the sequence is KLSKR. Position 239 (Lys239) interacts with ATP.

It belongs to the class-I aminoacyl-tRNA synthetase family. Glutamate--tRNA ligase type 1 subfamily. As to quaternary structure, monomer. Zn(2+) serves as cofactor.

The protein resides in the cytoplasm. The catalysed reaction is tRNA(Glu) + L-glutamate + ATP = L-glutamyl-tRNA(Glu) + AMP + diphosphate. Catalyzes the attachment of glutamate to tRNA(Glu) in a two-step reaction: glutamate is first activated by ATP to form Glu-AMP and then transferred to the acceptor end of tRNA(Glu). The chain is Glutamate--tRNA ligase from Frankia casuarinae (strain DSM 45818 / CECT 9043 / HFP020203 / CcI3).